A 312-amino-acid chain; its full sequence is DNA-directed RNA polymerase subunit alpha (312 aa).

Residues 1–229 (MLQYQIDRID…ELFQPLATVS (229 aa)) are alpha N-terminal domain (alpha-NTD). An alpha C-terminal domain (alpha-CTD) region spans residues 239–312 (EPAAEAQIPL…ISIPQSRTSA (74 aa)).

This sequence belongs to the RNA polymerase alpha chain family. In cyanobacteria the RNAP catalytic core is composed of 2 alpha, 1 beta, 1 beta', 1 gamma and 1 omega subunit. When a sigma factor is associated with the core the holoenzyme is formed, which can initiate transcription.

It carries out the reaction RNA(n) + a ribonucleoside 5'-triphosphate = RNA(n+1) + diphosphate. Functionally, DNA-dependent RNA polymerase catalyzes the transcription of DNA into RNA using the four ribonucleoside triphosphates as substrates. The protein is DNA-directed RNA polymerase subunit alpha of Prochlorococcus marinus (strain NATL1A).